The chain runs to 464 residues: MNAATKLPTQLGPIHFTGIGGIGMSGIAEVLLTHGYTVQGSDLKPSKITERLERLGAKIFIGQVGENLADAEVVVISSAIKPGNPELETARARGLPVVRRAEMLAELMRLKSNIAIAGTHGKTTTTTMVATLLDRGGIDPTVINGGIIHAYDSNARAGAGEWMVVEADESDGTFNRLPATIAVVTNIDPEHMEHWGSFERLKDGFHEFVSNIPFYGLAVCCTDHPEVQALVGRITDRRVVTFGFNTQADVRAVNLTYKSGVAHFDILLRNEGQVISGCTLPMPGDHNVSNALAAVAVARHLGMKRDEIRAALAGFAGVNRRFTKVAELGGVTIIDDYGHHPVEIAAVLKAARQASEGRVIAVHQPHRFSRLASLFEDFCTCFNEADVVGISDIFAAGEDPIPGASRDDLVKGLIAHGHRHAVAVPDEDALEALIRAEAKPGDIVVCLGAGTISTWAHNLPARMG.

Position 118–124 (118–124 (GTHGKTT)) interacts with ATP.

The protein belongs to the MurCDEF family.

Its subcellular location is the cytoplasm. The catalysed reaction is UDP-N-acetyl-alpha-D-muramate + L-alanine + ATP = UDP-N-acetyl-alpha-D-muramoyl-L-alanine + ADP + phosphate + H(+). It participates in cell wall biogenesis; peptidoglycan biosynthesis. Functionally, cell wall formation. The protein is UDP-N-acetylmuramate--L-alanine ligase of Dinoroseobacter shibae (strain DSM 16493 / NCIMB 14021 / DFL 12).